The sequence spans 278 residues: NAD kinase (278 aa).

Asp-67 serves as the catalytic Proton acceptor. Residues 67–68 (DG), Arg-72, 137–138 (NE), Lys-148, Arg-165, Asp-167, 178–183 (TGYAMS), Ala-202, and Gln-237 contribute to the NAD(+) site.

It belongs to the NAD kinase family. It depends on a divalent metal cation as a cofactor.

Its subcellular location is the cytoplasm. It carries out the reaction NAD(+) + ATP = ADP + NADP(+) + H(+). Its function is as follows. Involved in the regulation of the intracellular balance of NAD and NADP, and is a key enzyme in the biosynthesis of NADP. Catalyzes specifically the phosphorylation on 2'-hydroxyl of the adenosine moiety of NAD to yield NADP. This Thermococcus kodakarensis (strain ATCC BAA-918 / JCM 12380 / KOD1) (Pyrococcus kodakaraensis (strain KOD1)) protein is NAD kinase.